Consider the following 169-residue polypeptide: NADH-quinone oxidoreductase subunit I (169 aa).

4Fe-4S ferredoxin-type domains follow at residues 61–90 (RKYK…IEAQ) and 100–129 (VRYD…EGPN). Positions 70, 73, 76, 80, 109, 112, 115, and 119 each coordinate [4Fe-4S] cluster.

It belongs to the complex I 23 kDa subunit family. As to quaternary structure, NDH-1 is composed of 14 different subunits. Subunits NuoA, H, J, K, L, M, N constitute the membrane sector of the complex. [4Fe-4S] cluster is required as a cofactor.

It localises to the cell inner membrane. The enzyme catalyses a quinone + NADH + 5 H(+)(in) = a quinol + NAD(+) + 4 H(+)(out). Its function is as follows. NDH-1 shuttles electrons from NADH, via FMN and iron-sulfur (Fe-S) centers, to quinones in the respiratory chain. The immediate electron acceptor for the enzyme in this species is believed to be ubiquinone. Couples the redox reaction to proton translocation (for every two electrons transferred, four hydrogen ions are translocated across the cytoplasmic membrane), and thus conserves the redox energy in a proton gradient. This chain is NADH-quinone oxidoreductase subunit I, found in Ehrlichia chaffeensis (strain ATCC CRL-10679 / Arkansas).